Reading from the N-terminus, the 387-residue chain is 3-ketoacyl-CoA thiolase (387 aa).

The active-site Acyl-thioester intermediate is cysteine 91. Catalysis depends on proton acceptor residues histidine 343 and cysteine 373.

Belongs to the thiolase-like superfamily. Thiolase family. As to quaternary structure, heterotetramer of two alpha chains (FadB) and two beta chains (FadA).

Its subcellular location is the cytoplasm. The catalysed reaction is an acyl-CoA + acetyl-CoA = a 3-oxoacyl-CoA + CoA. The protein operates within lipid metabolism; fatty acid beta-oxidation. Its function is as follows. Catalyzes the final step of fatty acid oxidation in which acetyl-CoA is released and the CoA ester of a fatty acid two carbons shorter is formed. This Aeromonas salmonicida (strain A449) protein is 3-ketoacyl-CoA thiolase.